The primary structure comprises 479 residues: tRNA modification GTPase MnmE (479 aa).

(6S)-5-formyl-5,6,7,8-tetrahydrofolate-binding residues include arginine 30, glutamate 91, and lysine 130. Residues 226–402 enclose the TrmE-type G domain; sequence GFRIVLTGLP…VLKDLVKEFA (177 aa). Residue asparagine 236 coordinates K(+). GTP contacts are provided by residues 236–241, 255–261, and 280–283; these read NVGKSS, TDIPGTT, and DTAG. Serine 240 serves as a coordination point for Mg(2+). 3 residues coordinate K(+): threonine 255, isoleucine 257, and threonine 260. Threonine 261 provides a ligand contact to Mg(2+). Lysine 479 contributes to the (6S)-5-formyl-5,6,7,8-tetrahydrofolate binding site.

Belongs to the TRAFAC class TrmE-Era-EngA-EngB-Septin-like GTPase superfamily. TrmE GTPase family. Homodimer. Heterotetramer of two MnmE and two MnmG subunits. It depends on K(+) as a cofactor.

It is found in the cytoplasm. Exhibits a very high intrinsic GTPase hydrolysis rate. Involved in the addition of a carboxymethylaminomethyl (cmnm) group at the wobble position (U34) of certain tRNAs, forming tRNA-cmnm(5)s(2)U34. The protein is tRNA modification GTPase MnmE of Bdellovibrio bacteriovorus (strain ATCC 15356 / DSM 50701 / NCIMB 9529 / HD100).